The sequence spans 358 residues: MKMTFRWYGEGNDSITLKQIKQIPGCSGLMGVIDQYAAGEVWEESVIAEYVEHVHKAGLEVEVIESVNVHEDIKLGLPSRELYIENYIKTIRNLAKHGIKVIVYNFMPVLDWLRTDLARVIEEDGSNSLYYDEEELLGLTPLQIVENTSKSSNGFTLPGWEPERLKELENVLALYKNIDPDKLRENYKYFLEKVIPVCEECGVKMAVHPDDPAWPIFGLPRIAHSEELFDKILELYDSESHTICLCTGSLGSNPENNIPEIIRHFGGKNRVGCFHVRNVKYLGYRKFRESSHLSSDGSLDMFEIMKAIHETAPDTYIRPDHGRMIWDEVGRPGYGLYDRALGIAYLNGIWEALEKSSK.

It belongs to the mannonate dehydratase family. It depends on Fe(2+) as a cofactor. Requires Mn(2+) as cofactor.

The catalysed reaction is D-mannonate = 2-dehydro-3-deoxy-D-gluconate + H2O. The protein operates within carbohydrate metabolism; pentose and glucuronate interconversion. Catalyzes the dehydration of D-mannonate. This Lachnoclostridium phytofermentans (strain ATCC 700394 / DSM 18823 / ISDg) (Clostridium phytofermentans) protein is Mannonate dehydratase.